The sequence spans 280 residues: Probable N-acetyltransferase 14 (280 aa).

2 helical membrane-spanning segments follow: residues 37–57 and 60–80; these read LILH…LSSI and CVLH…VIYL. Residues 111–152 are disordered; it reads PDLPNPHLGRAKLTTNQEKTRRRKKAKEKEKMNESEQVDEDE. In terms of domain architecture, N-acetyltransferase spans 116-273; sequence PHLGRAKLTT…EKGWLGYPLT (158 aa).

This sequence belongs to the camello family.

The protein localises to the membrane. Functionally, probable acetyltransferase. The chain is Probable N-acetyltransferase 14 (nat14) from Danio rerio (Zebrafish).